A 155-amino-acid chain; its full sequence is SsrA-binding protein (155 aa).

It belongs to the SmpB family.

It is found in the cytoplasm. Required for rescue of stalled ribosomes mediated by trans-translation. Binds to transfer-messenger RNA (tmRNA), required for stable association of tmRNA with ribosomes. tmRNA and SmpB together mimic tRNA shape, replacing the anticodon stem-loop with SmpB. tmRNA is encoded by the ssrA gene; the 2 termini fold to resemble tRNA(Ala) and it encodes a 'tag peptide', a short internal open reading frame. During trans-translation Ala-aminoacylated tmRNA acts like a tRNA, entering the A-site of stalled ribosomes, displacing the stalled mRNA. The ribosome then switches to translate the ORF on the tmRNA; the nascent peptide is terminated with the 'tag peptide' encoded by the tmRNA and targeted for degradation. The ribosome is freed to recommence translation, which seems to be the essential function of trans-translation. This chain is SsrA-binding protein, found in Gloeothece citriformis (strain PCC 7424) (Cyanothece sp. (strain PCC 7424)).